We begin with the raw amino-acid sequence, 357 residues long: S-adenosylmethionine:tRNA ribosyltransferase-isomerase (357 aa).

Belongs to the QueA family. In terms of assembly, monomer.

The protein resides in the cytoplasm. It catalyses the reaction 7-aminomethyl-7-carbaguanosine(34) in tRNA + S-adenosyl-L-methionine = epoxyqueuosine(34) in tRNA + adenine + L-methionine + 2 H(+). It participates in tRNA modification; tRNA-queuosine biosynthesis. In terms of biological role, transfers and isomerizes the ribose moiety from AdoMet to the 7-aminomethyl group of 7-deazaguanine (preQ1-tRNA) to give epoxyqueuosine (oQ-tRNA). In Hamiltonella defensa subsp. Acyrthosiphon pisum (strain 5AT), this protein is S-adenosylmethionine:tRNA ribosyltransferase-isomerase.